Here is a 1400-residue protein sequence, read N- to C-terminus: DNA-directed RNA polymerase subunit beta' (1400 aa).

Zn(2+) contacts are provided by cysteine 70, cysteine 72, cysteine 85, and cysteine 88. Mg(2+) is bound by residues aspartate 460, aspartate 462, and aspartate 464. Zn(2+) is bound by residues cysteine 814, cysteine 888, cysteine 895, and cysteine 898.

Belongs to the RNA polymerase beta' chain family. As to quaternary structure, the RNAP catalytic core consists of 2 alpha, 1 beta, 1 beta' and 1 omega subunit. When a sigma factor is associated with the core the holoenzyme is formed, which can initiate transcription. The cofactor is Mg(2+). It depends on Zn(2+) as a cofactor.

The enzyme catalyses RNA(n) + a ribonucleoside 5'-triphosphate = RNA(n+1) + diphosphate. Its function is as follows. DNA-dependent RNA polymerase catalyzes the transcription of DNA into RNA using the four ribonucleoside triphosphates as substrates. This is DNA-directed RNA polymerase subunit beta' from Methylococcus capsulatus (strain ATCC 33009 / NCIMB 11132 / Bath).